A 451-amino-acid polypeptide reads, in one-letter code: Phosphoglucosamine mutase (451 aa).

Ser107 acts as the Phosphoserine intermediate in catalysis. Positions 107, 246, 248, and 250 each coordinate Mg(2+). The residue at position 107 (Ser107) is a Phosphoserine.

This sequence belongs to the phosphohexose mutase family. It depends on Mg(2+) as a cofactor. Activated by phosphorylation.

It carries out the reaction alpha-D-glucosamine 1-phosphate = D-glucosamine 6-phosphate. In terms of biological role, catalyzes the conversion of glucosamine-6-phosphate to glucosamine-1-phosphate. In Burkholderia ambifaria (strain MC40-6), this protein is Phosphoglucosamine mutase.